Here is a 278-residue protein sequence, read N- to C-terminus: Secoisolariciresinol dehydrogenase (278 aa).

NAD(+) contacts are provided by residues 23 to 28 (GGAGGI), aspartate 47, valine 73, and asparagine 99. 2 residues coordinate substrate: serine 104 and serine 164. The active-site Proton donor/acceptor is tyrosine 167. Positions 171 and 200 each coordinate NAD(+).

It belongs to the short-chain dehydrogenases/reductases (SDR) family. As to quaternary structure, homotetramer.

It carries out the reaction (-)-secoisolariciresinol + 2 NAD(+) = (-)-matairesinol + 2 NADH + 2 H(+). Functionally, oxidoreductase involved in lignan biosynthesis. Catalyzes the stereospecific conversion of (-)-secoisolariciresinol to (-)-matairesinol via a lactol intermediate. The protein is Secoisolariciresinol dehydrogenase of Podophyllum peltatum (American mandrake).